Reading from the N-terminus, the 204-residue chain is uncharacterized protein (204 aa).

Positions M1–K10 are enriched in polar residues. 2 disordered regions span residues M1–R20 and D70–E99. An SPOR domain is found at V131–M204.

The protein to E.coli FtsN repeat regions.

This is an uncharacterized protein from Haemophilus influenzae (strain ATCC 51907 / DSM 11121 / KW20 / Rd).